The primary structure comprises 464 residues: L-cystine uptake protein TcyP (464 aa).

Helical transmembrane passes span 3-23 (TLLV…LYYM), 34-54 (VFTA…IYEP), 73-93 (YVKL…ISAF), 107-127 (GLII…GIAA), 184-204 (PTST…FIGV), 225-245 (IVMR…LALM), 263-283 (FVLA…LLIA), 347-367 (AGIY…IDPL), 371-391 (FILT…GVGG), and 395-415 (FAAL…ALVI).

The protein belongs to the dicarboxylate/amino acid:cation symporter (DAACS) (TC 2.A.23) family.

Its subcellular location is the membrane. Functionally, mediates uptake of L-cystine, the oxidized form of L-cysteine. In Bacillus cereus (strain ATCC 10987 / NRS 248), this protein is L-cystine uptake protein TcyP.